Reading from the N-terminus, the 469-residue chain is Glutamate--tRNA ligase (469 aa).

The 'HIGH' region signature appears at 9 to 19 (PSPTGFLHVGG). Residues 236-240 (KLSKR) carry the 'KMSKS' region motif. Lys239 contributes to the ATP binding site.

Belongs to the class-I aminoacyl-tRNA synthetase family. Glutamate--tRNA ligase type 1 subfamily. Monomer.

It is found in the cytoplasm. It catalyses the reaction tRNA(Glu) + L-glutamate + ATP = L-glutamyl-tRNA(Glu) + AMP + diphosphate. In terms of biological role, catalyzes the attachment of glutamate to tRNA(Glu) in a two-step reaction: glutamate is first activated by ATP to form Glu-AMP and then transferred to the acceptor end of tRNA(Glu). In Pseudoalteromonas atlantica (strain T6c / ATCC BAA-1087), this protein is Glutamate--tRNA ligase.